The primary structure comprises 150 residues: Small ribosomal subunit protein eS19 (150 aa).

Belongs to the eukaryotic ribosomal protein eS19 family. In terms of assembly, part of the 30S ribosomal subunit.

Its function is as follows. May be involved in maturation of the 30S ribosomal subunit. The sequence is that of Small ribosomal subunit protein eS19 from Thermoplasma volcanium (strain ATCC 51530 / DSM 4299 / JCM 9571 / NBRC 15438 / GSS1).